We begin with the raw amino-acid sequence, 473 residues long: Nitrogenase vanadium-iron protein alpha chain (473 aa).

[8Fe-7S] cluster-binding residues include Cys-49, Cys-74, and Cys-137. [7Fe-V-9S-C-homocitryl] cluster contacts are provided by Cys-256 and His-422.

Belongs to the NifD/NifK/NifE/NifN family. As to quaternary structure, hexamer of two alpha, two beta, and two delta chains. [8Fe-7S] cluster serves as cofactor. It depends on [7Fe-V-9S-C-homocitryl] cluster as a cofactor.

It catalyses the reaction N2 + 8 reduced [2Fe-2S]-[ferredoxin] + 16 ATP + 16 H2O = H2 + 8 oxidized [2Fe-2S]-[ferredoxin] + 2 NH4(+) + 16 ADP + 16 phosphate + 6 H(+). Functionally, this vanadium-iron protein is part of the nitrogenase complex that catalyzes the key enzymatic reactions in nitrogen fixation. The protein is Nitrogenase vanadium-iron protein alpha chain (vnfD) of Azotobacter chroococcum mcd 1.